The sequence spans 323 residues: tRNA dimethylallyltransferase (323 aa).

Position 12-19 (12-19 (GPTAAGKT)) interacts with ATP. Residue 14–19 (TAAGKT) participates in substrate binding. Interaction with substrate tRNA stretches follow at residues 37-40 (DSAL) and 161-165 (QRLIR).

It belongs to the IPP transferase family. As to quaternary structure, monomer. Requires Mg(2+) as cofactor.

It catalyses the reaction adenosine(37) in tRNA + dimethylallyl diphosphate = N(6)-dimethylallyladenosine(37) in tRNA + diphosphate. Functionally, catalyzes the transfer of a dimethylallyl group onto the adenine at position 37 in tRNAs that read codons beginning with uridine, leading to the formation of N6-(dimethylallyl)adenosine (i(6)A). This chain is tRNA dimethylallyltransferase, found in Pseudomonas putida (strain W619).